The primary structure comprises 496 residues: MFNTGTPDSENTYDAILVGAGIMSSTLAVLLHELEPDLRLLVVEKLSSAGLESSCAKNNAGTGHAANCELNYTPIQEDGHLSTTKAFEINKSFEQSLEFWASLAEKGKLIPKTFLNKLPHISLVFGDEDISLLKKRFSKLSSHAAFAKMEFTMDHGELQDWIPLIMDGRKQSEKIAATRIKRGTDIDFGNLTRSYINQIEGAKSIDINYSTNVENLQQDSEGDWYLSLEGAKKNRIVRSKFVFLGAGGGALSLLQKSRIPEGLLYAGFPVSGKWLICDEEKSTKTHNAKVYGKAAVGAPPMSVPHLDTRWIDKKKSLLFGPFAGFSSNFLKYGSKLDLFRSIKTTNLFSMLQAGLDNIDLGKYLLNQLIQTNEDRIDTLKRFLPQVSPNDWKLSTAGQRVQIIKQTSKGGVLKMGTEVVTSSDGSLAALLGASPGASTAVTIMIEVLNRCWQEKMKSSKWKNKMLELFPSIGTDINSDQEALLAIRKRNDFLLKLI.

This sequence belongs to the MQO family. FAD serves as cofactor.

It carries out the reaction (S)-malate + a quinone = a quinol + oxaloacetate. The protein operates within carbohydrate metabolism; tricarboxylic acid cycle; oxaloacetate from (S)-malate (quinone route): step 1/1. This Prochlorococcus marinus (strain NATL2A) protein is Probable malate:quinone oxidoreductase.